Here is a 49-residue protein sequence, read N- to C-terminus: uncharacterized protein (49 aa).

This is an uncharacterized protein from Saccharomyces cerevisiae (strain ATCC 204508 / S288c) (Baker's yeast).